Here is a 227-residue protein sequence, read N- to C-terminus: Protein FAM3C (227 aa).

The first 24 residues, 1 to 24, serve as a signal peptide directing secretion; that stretch reads MRVAGAAKLVVAVAVFLLTFYVIS. 2 disulfide bridges follow: Cys-58/Cys-86 and Cys-64/Cys-221. The region spanning 67 to 225 is the GG-type lectin domain; sequence KHFAFKMASG…VEMEGCIPQK (159 aa).

This sequence belongs to the FAM3 family.

It is found in the secreted. The protein resides in the cytoplasmic vesicle. In terms of biological role, may be involved in retinal laminar formation. Promotes epithelial to mesenchymal transition. The protein is Protein FAM3C (FAM3C) of Bos taurus (Bovine).